The following is a 79-amino-acid chain: Cytochrome c oxidase subunit 7A1, mitochondrial (79 aa).

Residues 1–21 (MQALRVSQALIRSFSSTARNR) constitute a mitochondrion transit peptide. The Mitochondrial matrix portion of the chain corresponds to 22-46 (FQNRVREKQKLFQEDNDIPLYLKGG). The chain crosses the membrane as a helical span at residues 47–75 (IVDNILYRVTMTLCLGGTVYSLYSLGWAS). Over 76-79 (FPRN) the chain is Mitochondrial intermembrane.

It belongs to the cytochrome c oxidase VIIa family. In terms of assembly, component of the complex IV (CIV, cytochrome c oxidase), a multisubunit enzyme composed of 14 subunits. The complex is composed of a catalytic core of 3 subunits MT-CO1, MT-CO2 and MT-CO3, encoded in the mitochondrial DNA, and 11 supernumerary subunits COX4I1 (or COX4I2), COX5A, COX5B, COX6A2 (or COX6A1), COX6B1 (or COX6B2), COX6C, COX7A1 (or COX7A2), COX7B, COX7C, COX8B and NDUFA4, which are encoded in the nuclear genome. The complex exists as a monomer or a dimer and forms supercomplexes (SCs) in the inner mitochondrial membrane with NADH-ubiquinone oxidoreductase (complex I, CI) and ubiquinol-cytochrome c oxidoreductase (cytochrome b-c1 complex, complex III, CIII), resulting in different assemblies (supercomplex SCI(1)III(2)IV(1) and megacomplex MCI(2)III(2)IV(2)).

It localises to the mitochondrion inner membrane. It functions in the pathway energy metabolism; oxidative phosphorylation. In terms of biological role, component of the mitochondrial respiratory complex IV (CIV, also named cytochrome c oxidase complex), the last enzyme in the mitochondrial electron transport chain which drives oxidative phosphorylation. The CIV complex is the component of the respiratory chain that catalyzes the reduction of oxygen to water. Acts as an assembly factor that specifically drives the homodimerization of CIV complexes, mediating the formation of mitochondrial respiratory supercomplexes (respirasomes) containing two CIV: supercomplxes with two molecules of CIV show improved activity. Despite being highly expressed in brown adipose tissue, not required for thermogenesis. The sequence is that of Cytochrome c oxidase subunit 7A1, mitochondrial (COX7A1) from Homo sapiens (Human).